Here is a 189-residue protein sequence, read N- to C-terminus: Acireductone dioxygenase 1 (189 aa).

4 residues coordinate Fe(2+): H102, H104, E108, and H146. Ni(2+) is bound by residues H102, H104, E108, and H146.

This sequence belongs to the acireductone dioxygenase (ARD) family. As to quaternary structure, monomer. Fe(2+) serves as cofactor. Ni(2+) is required as a cofactor.

The enzyme catalyses 1,2-dihydroxy-5-(methylsulfanyl)pent-1-en-3-one + O2 = 3-(methylsulfanyl)propanoate + CO + formate + 2 H(+). It catalyses the reaction 1,2-dihydroxy-5-(methylsulfanyl)pent-1-en-3-one + O2 = 4-methylsulfanyl-2-oxobutanoate + formate + 2 H(+). Its pathway is amino-acid biosynthesis; L-methionine biosynthesis via salvage pathway; L-methionine from S-methyl-5-thio-alpha-D-ribose 1-phosphate: step 5/6. Catalyzes 2 different reactions between oxygen and the acireductone 1,2-dihydroxy-3-keto-5-methylthiopentene (DHK-MTPene) depending upon the metal bound in the active site. Fe-containing acireductone dioxygenase (Fe-ARD) produces formate and 2-keto-4-methylthiobutyrate (KMTB), the alpha-ketoacid precursor of methionine in the methionine recycle pathway. Ni-containing acireductone dioxygenase (Ni-ARD) produces methylthiopropionate, carbon monoxide and formate, and does not lie on the methionine recycle pathway. The chain is Acireductone dioxygenase 1 from Nocardia farcinica (strain IFM 10152).